Here is a 393-residue protein sequence, read N- to C-terminus: Probable RNA methyltransferase sce3898 (393 aa).

Glu82 functions as the Proton acceptor in the catalytic mechanism. The region spanning 90–329 (RPGRYSACVS…VRSARLDAFR (240 aa)) is the Radical SAM core domain. Cys97 and Cys353 are joined by a disulfide. [4Fe-4S] cluster-binding residues include Cys104, Cys108, and Cys111. S-adenosyl-L-methionine contacts are provided by residues 157–158 (GE), 212–214 (SLG), and Asn294. Cys353 (S-methylcysteine intermediate) is an active-site residue. A disordered region spans residues 357-393 (ARPSAEAQRPGGRRAPPRPGATAGAADVGPSAPPRPA). Positions 373 to 382 (PRPGATAGAA) are enriched in low complexity.

The protein belongs to the radical SAM superfamily. RlmN family. [4Fe-4S] cluster serves as cofactor.

It localises to the cytoplasm. The chain is Probable RNA methyltransferase sce3898 from Sorangium cellulosum (strain So ce56) (Polyangium cellulosum (strain So ce56)).